The primary structure comprises 305 residues: Putative lipid kinase USA300HOU_0749 (305 aa).

Positions 3–139 (NKYTHGVLFY…YDVIKINNQY (137 aa)) constitute a DAGKc domain. Residues Ser44, 74–80 (GDGTVNE), and Thr101 each bind ATP. 3 residues coordinate Mg(2+): Ser220, Asp223, and Glu225. Glu281 acts as the Proton acceptor in catalysis.

It belongs to the diacylglycerol/lipid kinase family. Mg(2+) is required as a cofactor.

Its function is as follows. May catalyze the ATP-dependent phosphorylation of lipids other than diacylglycerol (DAG). The sequence is that of Putative lipid kinase USA300HOU_0749 from Staphylococcus aureus (strain USA300 / TCH1516).